Here is a 148-residue protein sequence, read N- to C-terminus: Large ribosomal subunit protein bL9 (148 aa).

Belongs to the bacterial ribosomal protein bL9 family.

Its function is as follows. Binds to the 23S rRNA. The polypeptide is Large ribosomal subunit protein bL9 (Caldicellulosiruptor saccharolyticus (strain ATCC 43494 / DSM 8903 / Tp8T 6331)).